The primary structure comprises 723 residues: Aspartate--tRNA(Asp/Asn) ligase 1 (723 aa).

Glutamate 206 is a binding site for L-aspartate. The tract at residues 230-233 (QLFK) is aspartate. Arginine 252 is a binding site for L-aspartate. Residues 252–254 (RDE) and glutamine 261 each bind ATP. An L-aspartate-binding site is contributed by histidine 481. ATP is bound at residue glutamate 516. Residue arginine 523 coordinates L-aspartate. 568–571 (GMDR) contacts ATP.

It belongs to the class-II aminoacyl-tRNA synthetase family. Type 1 subfamily. Homodimer.

It localises to the cytoplasm. It catalyses the reaction tRNA(Asx) + L-aspartate + ATP = L-aspartyl-tRNA(Asx) + AMP + diphosphate. In terms of biological role, aspartyl-tRNA synthetase with relaxed tRNA specificity since it is able to aspartylate not only its cognate tRNA(Asp) but also tRNA(Asn). Reaction proceeds in two steps: L-aspartate is first activated by ATP to form Asp-AMP and then transferred to the acceptor end of tRNA(Asp/Asn). In Syntrophus aciditrophicus (strain SB), this protein is Aspartate--tRNA(Asp/Asn) ligase 1.